The following is a 94-amino-acid chain: MEARDIILKPLITEKSVAKMSEGKYAFKVRLDANKTQIKQAIEEIFGVTVVRVNTMRVRGKLRRQGKYIGRRSDWKKAIVQLKEGDSIKVFEGL.

The protein belongs to the universal ribosomal protein uL23 family. In terms of assembly, part of the 50S ribosomal subunit. Contacts protein L29, and trigger factor when it is bound to the ribosome.

Its function is as follows. One of the early assembly proteins it binds 23S rRNA. One of the proteins that surrounds the polypeptide exit tunnel on the outside of the ribosome. Forms the main docking site for trigger factor binding to the ribosome. The chain is Large ribosomal subunit protein uL23 from Symbiobacterium thermophilum (strain DSM 24528 / JCM 14929 / IAM 14863 / T).